The sequence spans 119 residues: Large ribosomal subunit protein bL20 (119 aa).

This sequence belongs to the bacterial ribosomal protein bL20 family.

In terms of biological role, binds directly to 23S ribosomal RNA and is necessary for the in vitro assembly process of the 50S ribosomal subunit. It is not involved in the protein synthesizing functions of that subunit. This chain is Large ribosomal subunit protein bL20, found in Azorhizobium caulinodans (strain ATCC 43989 / DSM 5975 / JCM 20966 / LMG 6465 / NBRC 14845 / NCIMB 13405 / ORS 571).